Here is a 344-residue protein sequence, read N- to C-terminus: MSFLSRFVCAVPRQAIFRTFSTLTGSSGCKYLPESTFNTIQKVSFCKKSAKGKDGDLKKKCAEAAKKEKEAAEKKKCAEAAKKEKEAAEKKKCAEAAKKEKEAAEKKKCAEAAKKEKEAAEKKKCAEAAKKEKEAAEKKKCAEAAKKEKEAAEKKKCAEAAKKEKEAAEKKKCAEAAQKKKCAELAKKEQEAAEKKKCAEAAKKEKEAAEKKKCEERAKKEKEAAEKKKCEERAKKEKEAAEKKKCAEAAKKEKEAAEKKKCAEAAQKKKCAELAKKAKEAAEKKKCAKKAGEKGSKQSGSDKGKKNGKKNDMKNKCAMLAKKAKEEALKKKCAAAQKKCEPKK.

A run of 12 repeats spans residues 74–89 (KKKC…EAAE), 90–105 (KKKC…EAAE), 106–121 (KKKC…EAAE), 122–137 (KKKC…EAAE), 138–153 (KKKC…EAAE), 154–169 (KKKC…EAAE), 170–185 (KKKC…CAEL), 186–201 (AKKE…CAEA), 202–217 (AKKE…CEER), 218–233 (AKKE…CEER), 234–249 (AKKE…CAEA), and 250–265 (AKKE…CAEA). The interval 74–344 (KKKCAEAAKK…AAQKKCEPKK (271 aa)) is 17 X 16 AA approximate tandem repeats of K-K-K-C-X-E-X-A-[KQ]-K-X-X-E-X-A-X. Positions 206–244 (KEAAEKKKCEERAKKEKEAAEKKKCEERAKKEKEAAEKK) are disordered. The 13; approximate repeat unit spans residues 266–281 (AQKKKCAELAKKAKEA). A 14; approximate repeat occupies 282 to 297 (AEKKKCAKKAGEKGSK). Residues 285–315 (KKCAKKAGEKGSKQSGSDKGKKNGKKNDMKN) are compositionally biased toward basic and acidic residues. The disordered stretch occupies residues 285 to 318 (KKCAKKAGEKGSKQSGSDKGKKNGKKNDMKNKCA). Residues 298-313 (QSGSDKGKKNGKKNDM) form a 15; approximate repeat. Repeat 16 spans residues 314–329 (KNKCAMLAKKAKEEAL). Residues 330–344 (KKKCAAAQKKCEPKK) form a 17; truncated repeat.

As to expression, testis. Located in spermatocytes and spermatid bundles.

Its subcellular location is the cytoplasm. Possible structural role in the sperm tail. It is associated with axonemal structures. The chain is Axoneme-associated protein mst101(1) (mst101(1)) from Drosophila hydei (Fruit fly).